The following is a 243-amino-acid chain: NAD-dependent protein deacetylase (243 aa).

The region spanning 1 to 243 (MKHDLETLKH…VSVVKSLMTE (243 aa)) is the Deacetylase sirtuin-type domain. Residues Ala-24, Phe-35, Arg-36, Gln-105, Ile-107, Asp-108, and His-123 each coordinate NAD(+). Phe-35 lines the nicotinamide pocket. Positions 107 and 108 each coordinate nicotinamide. His-123 serves as the catalytic Proton acceptor. 4 residues coordinate Zn(2+): Cys-131, Cys-134, Cys-151, and Cys-154. The NAD(+) site is built by Ser-192, Ser-193, Asn-215, and Asp-232.

Belongs to the sirtuin family. Class U subfamily. The cofactor is Zn(2+).

The protein resides in the cytoplasm. It catalyses the reaction N(6)-acetyl-L-lysyl-[protein] + NAD(+) + H2O = 2''-O-acetyl-ADP-D-ribose + nicotinamide + L-lysyl-[protein]. NAD-dependent protein deacetylase which modulates the activities of several enzymes which are inactive in their acetylated form. This is NAD-dependent protein deacetylase from Staphylococcus aureus (strain COL).